A 155-amino-acid chain; its full sequence is Sweet protein mabinlin-2 (155 aa).

The N-terminal stretch at 1–20 (MAKLIFLFATLALFVLLANA) is a signal peptide. A propeptide spanning residues 21 to 35 (SIQTTVIEVDEEEDN) is cleaved from the precursor. Pyrrolidone carboxylic acid is present on Gln-36. Intrachain disulfides connect Cys-40–Cys-103, Cys-53–Cys-92, Cys-93–Cys-141, and Cys-105–Cys-149. The interval 64-86 (GGQPDELEDEVEDDNDDENQPRR) is disordered. The segment covering 68-81 (DELEDEVEDDNDDE) has biased composition (acidic residues). The propeptide occupies 69-82 (ELEDEVEDDNDDEN). Position 83 is a pyrrolidone carboxylic acid (Gln-83). Pro-155 is a propeptide.

Belongs to the 2S seed storage albumins family. In terms of assembly, heterodimer of a small A and a large B chain linked by disulfide bonds.

Functionally, heat stable 2S seed storage protein having sweetness-inducing activity. This Capparis masaikai (Mabinlang) protein is Sweet protein mabinlin-2.